The chain runs to 598 residues: Peroxisomal multifunctional enzyme type 2 (598 aa).

Residues 1–309 are (3R)-hydroxyacyl-CoA dehydrogenase; sequence MSSSDGKLRY…LEVLEKLKEG (309 aa). NAD(+) is bound by residues 16 to 40, Leu24, Asp43, 78 to 79, and Asn102; these read VVTGAGAGLGREYALLFAERGAKVV and SV. Substrate is bound at residue Ser154. Catalysis depends on Tyr167, which acts as the Proton acceptor. NAD(+)-binding positions include 167 to 171 and 199 to 202; these read YTAAK and AASR. Residues 310 to 598 are enoyl-CoA hydratase 2; sequence GGDAIEDAFE…VDLKSSQAKL (289 aa). (3R)-3-hydroxydecanoyl-CoA-binding positions include 390 to 391, Lys419, 496 to 501, Gly519, and Phe549; these read HG and DKNPLH. Residues 469–586 form the MaoC-like domain; the sequence is PAPNRQPDAT…VETGKEVISG (118 aa). The short motif at 596-598 is the Microbody targeting signal element; the sequence is AKL.

The protein belongs to the short-chain dehydrogenases/reductases (SDR) family. As to quaternary structure, homodimer.

Its subcellular location is the peroxisome. The catalysed reaction is a (3R)-3-hydroxyacyl-CoA + NAD(+) = a 3-oxoacyl-CoA + NADH + H(+). It carries out the reaction a (3R)-3-hydroxyacyl-CoA = a (2E)-enoyl-CoA + H2O. It participates in lipid metabolism; fatty acid beta-oxidation. Its function is as follows. Bifunctional enzyme acting on the peroxisomal beta-oxidation pathway for fatty acids. The chain is Peroxisomal multifunctional enzyme type 2 from Drosophila melanogaster (Fruit fly).